The following is a 246-amino-acid chain: Probable transcriptional regulatory protein ORF2U (246 aa).

This sequence belongs to the TACO1 family.

It is found in the cytoplasm. The protein is Probable transcriptional regulatory protein ORF2U of Hathewaya histolytica (Clostridium histolyticum).